The chain runs to 355 residues: 3-dehydroquinate synthase (355 aa).

Residues 71–76, 105–109, 129–130, lysine 142, and lysine 151 contribute to the NAD(+) site; these read EGEERK, GVVGD, and TS. Zn(2+)-binding residues include glutamate 184, histidine 246, and histidine 263.

This sequence belongs to the sugar phosphate cyclases superfamily. Dehydroquinate synthase family. It depends on Co(2+) as a cofactor. Zn(2+) is required as a cofactor. Requires NAD(+) as cofactor.

The protein localises to the cytoplasm. The enzyme catalyses 7-phospho-2-dehydro-3-deoxy-D-arabino-heptonate = 3-dehydroquinate + phosphate. The protein operates within metabolic intermediate biosynthesis; chorismate biosynthesis; chorismate from D-erythrose 4-phosphate and phosphoenolpyruvate: step 2/7. In terms of biological role, catalyzes the conversion of 3-deoxy-D-arabino-heptulosonate 7-phosphate (DAHP) to dehydroquinate (DHQ). In Streptococcus pneumoniae (strain Hungary19A-6), this protein is 3-dehydroquinate synthase.